The sequence spans 378 residues: Erythronate-4-phosphate dehydrogenase (378 aa).

Substrate contacts are provided by serine 45 and threonine 66. The NAD(+) site is built by aspartate 146 and threonine 175. Residue arginine 208 is part of the active site. Residue aspartate 232 coordinates NAD(+). Glutamate 237 is an active-site residue. Histidine 254 acts as the Proton donor in catalysis. NAD(+) is bound at residue glycine 257. Position 258 (tyrosine 258) interacts with substrate.

It belongs to the D-isomer specific 2-hydroxyacid dehydrogenase family. PdxB subfamily. In terms of assembly, homodimer.

Its subcellular location is the cytoplasm. It carries out the reaction 4-phospho-D-erythronate + NAD(+) = (R)-3-hydroxy-2-oxo-4-phosphooxybutanoate + NADH + H(+). Its pathway is cofactor biosynthesis; pyridoxine 5'-phosphate biosynthesis; pyridoxine 5'-phosphate from D-erythrose 4-phosphate: step 2/5. Its function is as follows. Catalyzes the oxidation of erythronate-4-phosphate to 3-hydroxy-2-oxo-4-phosphonooxybutanoate. The protein is Erythronate-4-phosphate dehydrogenase of Shigella boydii serotype 4 (strain Sb227).